The primary structure comprises 777 residues: Biotin sulfoxide reductase (777 aa).

Serine 148 is a binding site for Mo-bis(molybdopterin guanine dinucleotide).

Belongs to the prokaryotic molybdopterin-containing oxidoreductase family. It depends on Mo-bis(molybdopterin guanine dinucleotide) as a cofactor.

It catalyses the reaction [thioredoxin]-disulfide + L-methionine + H2O = L-methionine (S)-S-oxide + [thioredoxin]-dithiol. In terms of biological role, this enzyme may serve as a scavenger, allowing the cell to utilize biotin sulfoxide as a biotin source. It reduces a spontaneous oxidation product of biotin, D-biotin D-sulfoxide (BSO or BDS), back to biotin. Also exhibits methionine-(S)-sulfoxide (Met-S-SO) reductase activity, acting specifically on the (S) enantiomer in the free, but not the protein-bound form. It thus plays a role in assimilation of oxidized methionines. The sequence is that of Biotin sulfoxide reductase (bisC) from Escherichia coli (strain K12).